Reading from the N-terminus, the 255-residue chain is tRNA pseudouridine synthase A (255 aa).

The active-site Nucleophile is Asp60. Tyr118 is a binding site for substrate.

It belongs to the tRNA pseudouridine synthase TruA family. Homodimer.

The enzyme catalyses uridine(38/39/40) in tRNA = pseudouridine(38/39/40) in tRNA. Formation of pseudouridine at positions 38, 39 and 40 in the anticodon stem and loop of transfer RNAs. This chain is tRNA pseudouridine synthase A, found in Leuconostoc mesenteroides subsp. mesenteroides (strain ATCC 8293 / DSM 20343 / BCRC 11652 / CCM 1803 / JCM 6124 / NCDO 523 / NBRC 100496 / NCIMB 8023 / NCTC 12954 / NRRL B-1118 / 37Y).